Here is a 324-residue protein sequence, read N- to C-terminus: Adenosine kinase (324 aa).

Substrate contacts are provided by residues S8, D12, S36, G48, N52, F102, F116, and 172–173 (QQ). ATP is bound by residues N195, 223–228 (TLGPKG), and G256. D257 is a substrate binding site. Catalysis depends on D257, which acts as the Proton acceptor.

Belongs to the carbohydrate kinase PfkB family. As to quaternary structure, homodimer. It depends on Mg(2+) as a cofactor.

It carries out the reaction adenosine + ATP = AMP + ADP + H(+). The catalysed reaction is adenosine + GTP = GDP + AMP + H(+). It catalyses the reaction dGTP + adenosine = dGDP + AMP + H(+). The protein operates within purine metabolism; AMP biosynthesis via salvage pathway; AMP from adenosine: step 1/1. Functionally, catalyzes the phosphorylation of adenosine to adenosine monophosphate (AMP). Prefers dGTP and GTP to ATP as phosphate donors in vitro. The protein is Adenosine kinase (adoK) of Mycobacterium bovis (strain ATCC BAA-935 / AF2122/97).